We begin with the raw amino-acid sequence, 186 residues long: Temperature-induced lipocalin-1 (186 aa).

The short motif at 90 to 97 is the HPR (Hydrophobic proline-rich) element; that stretch reads PPFLPIIP. The interval 154 to 174 is disordered; sequence KLHKTPQSDTPPESNTAPEDS. Over residues 158–171 the composition is skewed to polar residues; it reads TPQSDTPPESNTAP.

Belongs to the calycin superfamily. Lipocalin family. In terms of tissue distribution, expressed ubiquitously at similar levels, except in dry seeds (at protein level). Present in seeds.

It is found in the cell membrane. Its subcellular location is the cytoplasm. It localises to the plastid. The protein localises to the chloroplast membrane. Its function is as follows. Involved in basal (BT) and acquired thermotolerance (AT), probably by preventing plasma membrane lipids peroxidation induced by severe heat-shock (HS). Lipocalin that confers protection against oxidative stress caused by heat, freezing, paraquat and light. Confers resistance to high salt (NaCl) levels, probably by protecting chloroplasts from ion toxicity via ion homeostasis maintenance. Required for seed longevity by ensuring polyunsaturated lipids integrity. This chain is Temperature-induced lipocalin-1, found in Arabidopsis thaliana (Mouse-ear cress).